Reading from the N-terminus, the 99-residue chain is N(2)-fixation sustaining protein CowN (99 aa).

Belongs to the CowN family.

In terms of biological role, is required to sustain N(2)-dependent growth in the presence of low levels of carbon monoxide (CO). Probably acts by protecting the N(2) fixation ability of the nitrogenase complex, which is inactivated in the presence of CO. The polypeptide is N(2)-fixation sustaining protein CowN (Magnetococcus marinus (strain ATCC BAA-1437 / JCM 17883 / MC-1)).